Reading from the N-terminus, the 79-residue chain is RNA-binding protein Hfq (79 aa).

The 61-residue stretch at 10 to 70 (DVFLKTVRKQ…ISTIMPGQPI (61 aa)) folds into the Sm domain.

This sequence belongs to the Hfq family. As to quaternary structure, homohexamer.

RNA chaperone that binds small regulatory RNA (sRNAs) and mRNAs to facilitate mRNA translational regulation in response to envelope stress, environmental stress and changes in metabolite concentrations. Also binds with high specificity to tRNAs. The sequence is that of RNA-binding protein Hfq from Bartonella bacilliformis (strain ATCC 35685 / KC583 / Herrer 020/F12,63).